Reading from the N-terminus, the 403-residue chain is Beta-galactoside alpha-2,6-sialyltransferase 1 (403 aa).

The Cytoplasmic portion of the chain corresponds to 1-9; it reads MIHTNLKRK. The helical; Signal-anchor for type II membrane protein transmembrane segment at 10 to 26 threads the bilayer; sequence FSCFVLVFLLFAIICVW. Residues 27–403 lie on the Lumenal side of the membrane; that stretch reads KKGSDYEALT…TLSGFRNNRC (377 aa). Disulfide bonds link Cys-139-Cys-403, Cys-181-Cys-332, and Cys-350-Cys-361. N-linked (GlcNAc...) asparagine glycosylation is found at Asn-146 and Asn-158. Substrate is bound by residues Ser-186, Asn-209, Asn-230, 319 to 321, Cys-350, Tyr-351, Thr-362, Tyr-366, His-367, and Lys-373; that span reads SSG. A Phosphotyrosine modification is found at Tyr-366.

The protein belongs to the glycosyltransferase 29 family. As to quaternary structure, monomer and homodimer. N-glycosylated.

It is found in the golgi apparatus. The protein resides in the golgi stack membrane. The protein localises to the secreted. The enzyme catalyses a beta-D-galactoside + CMP-N-acetyl-beta-neuraminate = an N-acetyl-alpha-neuraminyl-(2-&gt;6)-beta-D-galactosyl derivative + CMP + H(+). It functions in the pathway protein modification; protein glycosylation. Transfers sialic acid from CMP-sialic acid to galactose-containing acceptor substrates. This chain is Beta-galactoside alpha-2,6-sialyltransferase 1 (St6gal1), found in Mus musculus (Mouse).